Consider the following 340-residue polypeptide: Putative D-lactate dehydrogenase (340 aa).

NAD(+) is bound by residues Asn153 to Ile154, Asp174, Thr206 to Pro207, Val233 to Arg235, and Asp259. Arg235 is a catalytic residue. The active site involves Glu264. The Proton donor role is filled by His296.

Belongs to the D-isomer specific 2-hydroxyacid dehydrogenase family.

The enzyme catalyses (R)-lactate + NAD(+) = pyruvate + NADH + H(+). In Dictyostelium discoideum (Social amoeba), this protein is Putative D-lactate dehydrogenase (ldhA).